A 572-amino-acid polypeptide reads, in one-letter code: Bilirubin oxidase (572 aa).

Positions 1–19 are cleaved as a signal peptide; that stretch reads MFKHTLGAAALSLLFNSNA. Residues 20–38 constitute a propeptide that is removed on maturation; that stretch reads VQASPVPETSPATGHLFKR. Plastocyanin-like domains lie at 98-194 and 404-526; these read VGYD…YMLT and VAFA…VFVD. Positions 132, 134, 172, 174, 436, 439, 441, 494, 495, 496, 500, and 505 each coordinate Cu cation. N-linked (GlcNAc...) asparagine glycosylation is found at N510 and N520.

Belongs to the multicopper oxidase family. It depends on Cu cation as a cofactor.

It catalyses the reaction 2 (4Z,15Z)-bilirubin IXalpha + O2 = 2 biliverdin IXalpha + 2 H2O. Its function is as follows. Oxidation of bilirubin and other tetrapyrroles. The polypeptide is Bilirubin oxidase (Albifimbria verrucaria (Myrothecium leaf spot and pod blight fungus)).